Reading from the N-terminus, the 395-residue chain is Elongation factor Tu (395 aa).

The tr-type G domain maps to 10 to 204 (KPHVNVGTIG…AVDEYIPEPT (195 aa)). A G1 region spans residues 19-26 (GHVDHGKT). Residue 19–26 (GHVDHGKT) participates in GTP binding. T26 provides a ligand contact to Mg(2+). The segment at 60-64 (GITIA) is G2. The segment at 81–84 (DCPG) is G3. Residues 81-85 (DCPGH) and 136-139 (NKVD) contribute to the GTP site. The G4 stretch occupies residues 136 to 139 (NKVD). The segment at 174-176 (SAL) is G5.

This sequence belongs to the TRAFAC class translation factor GTPase superfamily. Classic translation factor GTPase family. EF-Tu/EF-1A subfamily. As to quaternary structure, monomer.

Its subcellular location is the cytoplasm. The catalysed reaction is GTP + H2O = GDP + phosphate + H(+). GTP hydrolase that promotes the GTP-dependent binding of aminoacyl-tRNA to the A-site of ribosomes during protein biosynthesis. The sequence is that of Elongation factor Tu from Exiguobacterium sibiricum (strain DSM 17290 / CCUG 55495 / CIP 109462 / JCM 13490 / 255-15).